The primary structure comprises 1152 residues: Fork-head transcriptional regulator FHL1 (1152 aa).

The segment at 55–147 (TATNNVLPES…SEDDNNNNNN (93 aa)) is disordered. Residues 64–83 (SNKKDKPIDTQDLHEDDPKA) show a composition bias toward basic and acidic residues. Residues 87 to 101 (TTSNGESTSNSNSVS) are compositionally biased toward low complexity. A compositionally biased stretch (polar residues) spans 126–135 (VPVTSNSKSL). The FHA domain maps to 171-229 (VVLGRKSNDETLQQNVDVHLSSKKAISRRHAKIFYNFGTQRFEISILGRNGAFVDNVFV). Disordered stretches follow at residues 254–362 (LPSN…RKNS) and 514–557 (KKQL…PPAS). Over residues 271–286 (KQFNPSDAINLRSNLY) the composition is skewed to polar residues. Over residues 296–307 (PKRKPQPSKKVK) the composition is skewed to basic residues. The segment covering 328 to 358 (TTAISPTASISTSTNAATAATATTPATTTAA) has biased composition (low complexity). Coiled coils occupy residues 449–537 (DDDE…SLAK) and 734–777 (ELYI…QKSL). The fork-head DNA-binding region spans 659 to 756 (KPNISFQIMI…QREIAKAKAK (98 aa)). Disordered regions lie at residues 787 to 833 (ASPY…GTSP), 846 to 867 (RGNGNTPATTSTTPSLPAMNDP), 951 to 1010 (HEGI…VPQQ), and 1057 to 1152 (PAMQ…AKTE). Composition is skewed to low complexity over residues 804-826 (SQSSSSSSSSATTTTNGQYGSTT), 851-863 (TPATTSTTPSLPA), and 973-987 (TTTSQSAATPTTTPQ). 2 stretches are compositionally biased toward pro residues: residues 996 to 1006 (VKPPISTPLPQ) and 1072 to 1082 (TSVPVPLPVPS). Composition is skewed to polar residues over residues 1115–1128 (SSLSRPPTFLSNKP) and 1143–1152 (QATNKIAKTE).

As to quaternary structure, interacts with IFH1 and TBF1.

The protein resides in the nucleus. In complex with IFH1, acts as a transcriptional regulator of rRNA and ribosomal protein genes. The FHL1-IFH1 complex is targeted to the ribosomal protein genes by the DNA-binding factor TBF1. The protein is Fork-head transcriptional regulator FHL1 (FHL1) of Candida albicans (strain SC5314 / ATCC MYA-2876) (Yeast).